Here is a 706-residue protein sequence, read N- to C-terminus: Melanopsin (706 aa).

The Extracellular portion of the chain corresponds to 1-86 (MTEIPSFQPP…VWDIPPLAHY (86 aa)). Asparagine 12, asparagine 64, and asparagine 69 each carry an N-linked (GlcNAc...) asparagine glycan. A helical membrane pass occupies residues 87-107 (IVGTAVFCIGCCGMFGNAVVV). Residues 108 to 121 (YSFIKSKGLRTPAN) are Cytoplasmic-facing. Residues 122-142 (FFIINLALSDFLMNLTNMPIF) form a helical membrane-spanning segment. The Extracellular portion of the chain corresponds to 143 to 159 (AVNSAFQRWLLSDFACE). The cysteines at positions 158 and 236 are disulfide-linked. A helical membrane pass occupies residues 160 to 180 (LYGFAGGLFGCLSINTLMAIS). Residues 181-201 (MDRYLVITKPFLVMRIVTKQR) lie on the Cytoplasmic side of the membrane. A helical transmembrane segment spans residues 202–222 (VMFAILLLWIWSLVWALPPLF). At 223–248 (GWSAYVSEGFGTSCTFDYMTPKLSYH) the chain is on the extracellular side. A helical transmembrane segment spans residues 249–269 (IFTYIIFFTMYFIPGGVMIYC). Over 270–314 (YYNIFATVKSGDKQFGKAVKEMAHEDVKNKAQQERQRKNEIKTAK) the chain is Cytoplasmic. A helical transmembrane segment spans residues 315 to 335 (IAFIVISLFMSAWTPYAVVSA). The Extracellular segment spans residues 336-351 (LGTLGYQDLVTPYLQS). A helical membrane pass occupies residues 352-372 (IPAMFAKSSAVYSPIVYAITY). Lysine 358 is modified (N6-(retinylidene)lysine). Topologically, residues 373–706 (PKFREAVKKH…LSEAHDETVL (334 aa)) are cytoplasmic. 3 disordered regions span residues 393–446 (SEEE…RQDT), 571–599 (RTES…SFNT), and 630–658 (QSSE…NETE). Low complexity-rich tracts occupy residues 404 to 418 (QSSA…QTTA) and 426 to 442 (SVDS…SGVS). Residues 571–593 (RTESGYDRSQDSQRKKVVGDTHR) are compositionally biased toward basic and acidic residues. Residues 645 to 658 (GITEVDTDSENETE) show a composition bias toward acidic residues.

This sequence belongs to the G-protein coupled receptor 1 family. Opsin subfamily. Expressed in Joseph cells and photoreceptor cells of the dorsal ocelli.

The protein localises to the cell membrane. Its function is as follows. Photoreceptor implicated in non-image-forming responses to light. Photoisomerizes covalently bound all-trans retinal back to 11-cis retinal. Most likely coupled to the G(q) signaling cascade. The chain is Melanopsin from Branchiostoma belcheri (Amphioxus).